A 507-amino-acid polypeptide reads, in one-letter code: Histidine ammonia-lyase (507 aa).

The segment at residues 141 to 143 (ASG) is a cross-link (5-imidazolinone (Ala-Gly)). Residue serine 142 is modified to 2,3-didehydroalanine (Ser).

The protein belongs to the PAL/histidase family. Post-translationally, contains an active site 4-methylidene-imidazol-5-one (MIO), which is formed autocatalytically by cyclization and dehydration of residues Ala-Ser-Gly.

The protein localises to the cytoplasm. The catalysed reaction is L-histidine = trans-urocanate + NH4(+). It functions in the pathway amino-acid degradation; L-histidine degradation into L-glutamate; N-formimidoyl-L-glutamate from L-histidine: step 1/3. This Burkholderia pseudomallei (strain 668) protein is Histidine ammonia-lyase.